Here is a 393-residue protein sequence, read N- to C-terminus: MSMTVTTSSNVSDAAMLSRLALQIKSWGKALGFAQIGICDTDLTAEEAKLQTWLDKGFHGEMAYMETHGMMRARPHELHSGTVRVISARMDYLPPEAGFATNLASPNMGYISRYAGGRDYHKLIRARLKKLGDQINSELVALGFDAADFRPFVDSAPVLERPLAEKAGIGWTGKHSLILNHDAGSWFFLGELLINLPLPVDIPVQEGCHSCVACITSCPTGAIVEPYTVDARRCISYLTIELQGAIPEEFRPLMGNRIYGCDDCQLVCPVNRAAPLTQESDFHIRPKLKQPELLTLFTWSETEFLKQTEGSAIRRIGHQRWLRNIAVALGNAPSSADIISALEQRKAQADVDEMVKEHIDWALAQQRAGDLQTNNRKTERLVRVIQKGLPRDA.

Aspartate 154 (proton donor) is an active-site residue. The 33-residue stretch at 196–228 (LPLPVDIPVQEGCHSCVACITSCPTGAIVEPYT) folds into the 4Fe-4S ferredoxin-type domain. [4Fe-4S] cluster is bound by residues cysteine 208, cysteine 211, cysteine 214, cysteine 218, cysteine 234, cysteine 261, cysteine 264, and cysteine 268.

This sequence belongs to the QueG family. In terms of assembly, monomer. It depends on cob(II)alamin as a cofactor. [4Fe-4S] cluster is required as a cofactor.

The protein localises to the cytoplasm. It catalyses the reaction epoxyqueuosine(34) in tRNA + AH2 = queuosine(34) in tRNA + A + H2O. Its pathway is tRNA modification; tRNA-queuosine biosynthesis. In terms of biological role, catalyzes the conversion of epoxyqueuosine (oQ) to queuosine (Q), which is a hypermodified base found in the wobble positions of tRNA(Asp), tRNA(Asn), tRNA(His) and tRNA(Tyr). The sequence is that of Epoxyqueuosine reductase from Shewanella oneidensis (strain ATCC 700550 / JCM 31522 / CIP 106686 / LMG 19005 / NCIMB 14063 / MR-1).